A 340-amino-acid chain; its full sequence is Ketol-acid reductoisomerase (NADP(+)) (340 aa).

Residues 2–181 (VKMYYEADVK…GCTKAGVIET (180 aa)) form the KARI N-terminal Rossmann domain. NADP(+) is bound by residues 25 to 28 (YGSQ), Arg-48, Ser-52, and 82 to 85 (DERQ). The active site involves His-107. NADP(+) is bound at residue Gly-133. Positions 182–327 (SFREETETDL…EQLRGMMSWI (146 aa)) constitute a KARI C-terminal knotted domain. Positions 190, 194, 226, and 230 each coordinate Mg(2+). Residue Ser-251 participates in substrate binding.

It belongs to the ketol-acid reductoisomerase family. It depends on Mg(2+) as a cofactor.

It catalyses the reaction (2R)-2,3-dihydroxy-3-methylbutanoate + NADP(+) = (2S)-2-acetolactate + NADPH + H(+). The catalysed reaction is (2R,3R)-2,3-dihydroxy-3-methylpentanoate + NADP(+) = (S)-2-ethyl-2-hydroxy-3-oxobutanoate + NADPH + H(+). The protein operates within amino-acid biosynthesis; L-isoleucine biosynthesis; L-isoleucine from 2-oxobutanoate: step 2/4. It participates in amino-acid biosynthesis; L-valine biosynthesis; L-valine from pyruvate: step 2/4. Involved in the biosynthesis of branched-chain amino acids (BCAA). Catalyzes an alkyl-migration followed by a ketol-acid reduction of (S)-2-acetolactate (S2AL) to yield (R)-2,3-dihydroxy-isovalerate. In the isomerase reaction, S2AL is rearranged via a Mg-dependent methyl migration to produce 3-hydroxy-3-methyl-2-ketobutyrate (HMKB). In the reductase reaction, this 2-ketoacid undergoes a metal-dependent reduction by NADPH to yield (R)-2,3-dihydroxy-isovalerate. The protein is Ketol-acid reductoisomerase (NADP(+)) of Brevibacillus brevis (strain 47 / JCM 6285 / NBRC 100599).